The primary structure comprises 81 residues: Sulfur carrier protein TusA (81 aa).

Residue cysteine 19 is the Cysteine persulfide intermediate of the active site.

It belongs to the sulfur carrier protein TusA family.

It localises to the cytoplasm. Its function is as follows. Sulfur carrier protein which probably makes part of a sulfur-relay system. The protein is Sulfur carrier protein TusA of Shewanella sediminis (strain HAW-EB3).